Here is a 197-residue protein sequence, read N- to C-terminus: Protein LURP-one-related 9 (197 aa).

The protein belongs to the LOR family.

Might be related to the phospholipid scramblase and tubby-like superfamily of membrane tethered transcription factors. This Arabidopsis thaliana (Mouse-ear cress) protein is Protein LURP-one-related 9.